We begin with the raw amino-acid sequence, 237 residues long: MKITWLGHAAFRVETAKAVILIDPFLNGNPGAKGIDFKEATRGVTHIALTHGHGDHVGDTVAIAREHGATVIANADLASWLGSQGVEKLDPGNTGGTLAHEGFTITFVNALHSSAMLTENGVSQALGNPNGLVFHFEDSPTLYHMGDTDIFSDMALINELHQPEIGIVPIGDRFTMGGAVAALACQRYFNFNSVLPCHYASFPIIDRTADKFIAGMADHPATKVLADPAGTVHSFQA.

This sequence belongs to the UPF0173 family.

The polypeptide is UPF0173 metal-dependent hydrolase BruAb2_0628 (Brucella abortus biovar 1 (strain 9-941)).